The following is a 183-amino-acid chain: Large ribosomal subunit protein uL5 (183 aa).

This sequence belongs to the universal ribosomal protein uL5 family. Part of the 50S ribosomal subunit; part of the 5S rRNA/L5/L18/L25 subcomplex. Contacts the 5S rRNA and the P site tRNA. Forms a bridge to the 30S subunit in the 70S ribosome.

In terms of biological role, this is one of the proteins that bind and probably mediate the attachment of the 5S RNA into the large ribosomal subunit, where it forms part of the central protuberance. In the 70S ribosome it contacts protein S13 of the 30S subunit (bridge B1b), connecting the 2 subunits; this bridge is implicated in subunit movement. Contacts the P site tRNA; the 5S rRNA and some of its associated proteins might help stabilize positioning of ribosome-bound tRNAs. This Fusobacterium nucleatum subsp. nucleatum (strain ATCC 25586 / DSM 15643 / BCRC 10681 / CIP 101130 / JCM 8532 / KCTC 2640 / LMG 13131 / VPI 4355) protein is Large ribosomal subunit protein uL5.